A 981-amino-acid polypeptide reads, in one-letter code: Protein deadlock (981 aa).

The segment at 1-60 is required for interaction with rhi/rhino; sequence MEKLDKIRMSQKLSCWQHILTTLGTSSKTEQEWNTFFKGFLESWRKPYCIQTSCDPSIPL. Disordered regions lie at residues 72-195, 274-307, 327-352, 375-446, 554-586, and 642-662; these read LQEN…ACAP, IMDKPKNKQQPQTPPPFLLNNEYTESSDDSDDQL, SRNEDCSPAPEKVKLKGERPAQNKKE, LRKS…PNNI, GLDDENVPEDEPRKEAKTAEQLPKPEPSTETLK, and LVHQPLAESNRNQRDEATAAR. Polar residues-rich tracts occupy residues 104–113 and 150–160; these read PSKSHSTGST and NHTTSIFSKAQ. Residues 167 to 191 are compositionally biased toward basic and acidic residues; sequence KLSSTKKRPDTCAPTDDSRKNREPR. The segment covering 337–352 has biased composition (basic and acidic residues); the sequence is EKVKLKGERPAQNKKE. The segment covering 377-390 has biased composition (basic residues); sequence KSVKKSAKQQKPRV. The span at 409-419 shows a compositional bias: basic and acidic residues; that stretch reads TQDKQSTHEMI. Positions 422-446 are enriched in polar residues; it reads QAKTISEASGQQTSQVQSSLSPNNI. Basic and acidic residues predominate over residues 652-662; the sequence is RNQRDEATAAR.

As to quaternary structure, component of the Rhino-Deadlock-Cutoff (RDC) complex, composed of rhi/rhino, del/deadlock and cuff/cutoff. Interacts (via N-terminus) with rhi/rhino (via C-terminus); this interaction is direct. Interacts (via C-terminus) with cuff/cutoff; this interaction is direct.

It is found in the nucleus. The protein localises to the cytoplasm. It localises to the cytoskeleton. The protein resides in the microtubule organizing center. Its subcellular location is the centrosome. It is found in the chromosome. Developmental protein involved in oogenesis. Required for germline maintenance, stability of mitotic spindles, localization of patterning determinants, oocyte growth and fusome biogenesis in males and females. Also required for dorso-ventral and antero-posterior patterning of oocyte and eggshell. May be involved in microtubule function during oogenesis. Part of a rhi-dependent transcription machinery that enables the generation of piRNA precursors from heterochromatin while maintaining the suppression of transposon-encoded promoters and enhancers. Component of the RDC complex (rhi, del and cuff) which binds to repressive H3K9me3 marks in the piRNA clusters. RDC promotes the bidirectional transcription of piRNA clusters at these sites by interacting with Moonshiner which forms a complex with the transcription initiation factors TfIIA-S and Trf2. This mechanism allows transcription to occur in piRNA clusters despite the lack of proper promoter elements and in the presence of the repressive H3K9me3 mark. As part of the RDC complex, involved in suppression of splicing. The polypeptide is Protein deadlock (del) (Drosophila melanogaster (Fruit fly)).